Here is a 470-residue protein sequence, read N- to C-terminus: Pyruvate kinase I (470 aa).

Substrate is bound at residue arginine 32. Residues asparagine 34, serine 36, aspartate 66, and threonine 67 each coordinate K(+). Position 34-37 (34-37 (NFSH)) interacts with ATP. Arginine 73 and lysine 156 together coordinate ATP. Lysine 220 serves as a coordination point for substrate. Glutamate 222 contributes to the Mg(2+) binding site. Positions 245, 246, and 278 each coordinate substrate. Aspartate 246 provides a ligand contact to Mg(2+).

The protein belongs to the pyruvate kinase family. Homotetramer. The cofactor is Mg(2+). K(+) is required as a cofactor.

It carries out the reaction pyruvate + ATP = phosphoenolpyruvate + ADP + H(+). It functions in the pathway carbohydrate degradation; glycolysis; pyruvate from D-glyceraldehyde 3-phosphate: step 5/5. With respect to regulation, belongs to type I PK; fructose 1,6-bisphosphate-activated. Its function is as follows. Catalyzes the formation of pyruvate in the last step of glycolysis, it is irreversible under physiological conditions. The reaction is critical for the control of metabolic flux in the second part of glycolysis. The polypeptide is Pyruvate kinase I (pykF) (Salmonella typhimurium (strain LT2 / SGSC1412 / ATCC 700720)).